Here is a 259-residue protein sequence, read N- to C-terminus: MVLTTGLKGAHVLITGGTRGMGEAMVHKFLQEEANVSYCARTVTNTEYDDFYSTLAEGNTARAVGTAFDVASKDSLVKWVESSAERLGRIDVIIANASPMHMEGETEHWESSFAIDVMGFVELVKAATPYLEKSPQASIIVQSSFMGREFYRSPPAAYGPCKAAQLQHVQELSHFLGPKGIRVNAISPGPVLCKGGPWELYSKINPEWVEEQRLKIPLKRLGGPTEVANVAVFLASPLASFVSGTNMLVDGGIHVGTQF.

NADP(+) is bound by residues aspartate 69, asparagine 96, and lysine 125. Residues serine 143 and serine 144 each act as proton donor in the active site. 3 residues coordinate NADP(+): tyrosine 158, lysine 162, and valine 191. The Proton acceptor role is filled by tyrosine 158. Residue lysine 162 is the Lowers pKa of active site Tyr of the active site.

This sequence belongs to the short-chain dehydrogenases/reductases (SDR) family.

The protein resides in the cytoplasm. It is found in the cytosol. The catalysed reaction is isoepoxydon + NADP(+) = phyllostine + NADPH + H(+). The protein operates within mycotoxin biosynthesis; patulin biosynthesis. Functionally, isoepoxydon dehydrogenase; part of the gene cluster that mediates the biosynthesis of patulin, an acetate-derived tetraketide mycotoxin produced by several fungal species that shows antimicrobial properties against several bacteria. PatN catalyzes the conversion of isoepoxydon into phyllostine. The pathway begins with the synthesis of 6-methylsalicylic acid by the polyketide synthase (PKS) patK via condensation of acetate and malonate units. The 6-methylsalicylic acid decarboxylase patG then catalyzes the decarboxylation of 6-methylsalicylic acid to yield m-cresol (also known as 3-methylphenol). These first reactions occur in the cytosol. The intermediate m-cresol is then transported into the endoplasmic reticulum where the cytochrome P450 monooxygenase patH converts it to m-hydroxybenzyl alcohol, which is further converted to gentisyl alcohol by the cytochrome P450 monooxygenase patI. The oxidoreductases patJ and patO further convert gentisyl alcohol to isoepoxydon in the vacuole. PatN catalyzes then the transformation of isoepoxydon into phyllostine. The cluster protein patF is responsible for the conversion from phyllostine to neopatulin whereas the alcohol dehydrogenase patD converts neopatulin to E-ascladiol. The steps between isoepoxydon and E-ascladiol occur in the cytosol, and E-ascladiol is probably secreted to the extracellular space by one of the cluster-specific transporters patC or patM. Finally, the secreted patulin synthase patE catalyzes the conversion of E-ascladiol to patulin. The chain is Isoepoxydon dehydrogenase patN from Penicillium expansum (Blue mold rot fungus).